The chain runs to 321 residues: Sporulation protein cse15 (321 aa).

Coiled coils occupy residues 37–70 (FHQKNNKLLKENTDMKEKLQQLSAELTHMSTKEK) and 108–205 (IEEK…KEKL). 2 stretches are compositionally biased toward basic and acidic residues: residues 234-243 (GTKQKEKTEE) and 282-293 (AKSHTIEELKNR). 2 disordered regions span residues 234–253 (GTKQKEKTEEEAPAAYAQPN) and 274–293 (AHAQSSDQAKSHTIEELKNR).

This chain is Sporulation protein cse15 (cse15), found in Bacillus subtilis (strain 168).